The sequence spans 132 residues: U-scoloptoxin(11)-Sa1a (132 aa).

Residues 1 to 19 (MIRFFAFVLFFATQELILC) form the signal peptide.

It belongs to the scoloptoxin-11 family. Contains 5 disulfide bonds. As to expression, expressed by the venom gland.

The protein resides in the secreted. The polypeptide is U-scoloptoxin(11)-Sa1a (Scolopendra alternans (Florida Keys giant centipede)).